We begin with the raw amino-acid sequence, 260 residues long: Pyridoxine 5'-phosphate synthase (260 aa).

Asparagine 15 contributes to the 3-amino-2-oxopropyl phosphate binding site. 17–18 (DH) is a 1-deoxy-D-xylulose 5-phosphate binding site. Arginine 26 provides a ligand contact to 3-amino-2-oxopropyl phosphate. Residue histidine 51 is the Proton acceptor of the active site. 1-deoxy-D-xylulose 5-phosphate-binding residues include arginine 53 and histidine 58. Glutamate 78 (proton acceptor) is an active-site residue. Threonine 108 serves as a coordination point for 1-deoxy-D-xylulose 5-phosphate. Histidine 199 functions as the Proton donor in the catalytic mechanism. 3-amino-2-oxopropyl phosphate is bound by residues glycine 200 and 221–222 (GH).

This sequence belongs to the PNP synthase family. Homooctamer; tetramer of dimers.

It is found in the cytoplasm. The catalysed reaction is 3-amino-2-oxopropyl phosphate + 1-deoxy-D-xylulose 5-phosphate = pyridoxine 5'-phosphate + phosphate + 2 H2O + H(+). It functions in the pathway cofactor biosynthesis; pyridoxine 5'-phosphate biosynthesis; pyridoxine 5'-phosphate from D-erythrose 4-phosphate: step 5/5. Its function is as follows. Catalyzes the complicated ring closure reaction between the two acyclic compounds 1-deoxy-D-xylulose-5-phosphate (DXP) and 3-amino-2-oxopropyl phosphate (1-amino-acetone-3-phosphate or AAP) to form pyridoxine 5'-phosphate (PNP) and inorganic phosphate. The polypeptide is Pyridoxine 5'-phosphate synthase (Cupriavidus metallidurans (strain ATCC 43123 / DSM 2839 / NBRC 102507 / CH34) (Ralstonia metallidurans)).